The following is a 356-amino-acid chain: S-adenosylmethionine:tRNA ribosyltransferase-isomerase (356 aa).

This sequence belongs to the QueA family. As to quaternary structure, monomer.

It localises to the cytoplasm. The catalysed reaction is 7-aminomethyl-7-carbaguanosine(34) in tRNA + S-adenosyl-L-methionine = epoxyqueuosine(34) in tRNA + adenine + L-methionine + 2 H(+). It functions in the pathway tRNA modification; tRNA-queuosine biosynthesis. In terms of biological role, transfers and isomerizes the ribose moiety from AdoMet to the 7-aminomethyl group of 7-deazaguanine (preQ1-tRNA) to give epoxyqueuosine (oQ-tRNA). In Escherichia coli (strain 55989 / EAEC), this protein is S-adenosylmethionine:tRNA ribosyltransferase-isomerase.